Here is a 217-residue protein sequence, read N- to C-terminus: Probable GTP-binding protein EngB (217 aa).

The region spanning 37–214 is the EngB-type G domain; that stretch reads DGVEIAFAGR…RAAMAKLLEE (178 aa). GTP contacts are provided by residues 45–52, 72–76, 92–95, 159–162, and 193–195; these read GRSNVGKS, GRTQE, DMPG, TKAD, and TSS. Positions 52 and 74 each coordinate Mg(2+).

The protein belongs to the TRAFAC class TrmE-Era-EngA-EngB-Septin-like GTPase superfamily. EngB GTPase family. The cofactor is Mg(2+).

In terms of biological role, necessary for normal cell division and for the maintenance of normal septation. This Bradyrhizobium diazoefficiens (strain JCM 10833 / BCRC 13528 / IAM 13628 / NBRC 14792 / USDA 110) protein is Probable GTP-binding protein EngB.